Reading from the N-terminus, the 228-residue chain is Probable U3 small nucleolar RNA-associated protein 11 (228 aa).

2 disordered regions span residues 1–23 (MSSL…EARK) and 192–211 (SMQK…DDEL). Positions 12-23 (AHKERSQPEARK) are enriched in basic and acidic residues.

This sequence belongs to the UTP11 family. Component of the ribosomal small subunit (SSU) processome.

Its subcellular location is the nucleus. The protein resides in the nucleolus. Its function is as follows. Involved in nucleolar processing of pre-18S ribosomal RNA. The protein is Probable U3 small nucleolar RNA-associated protein 11 of Arabidopsis thaliana (Mouse-ear cress).